We begin with the raw amino-acid sequence, 889 residues long: DNA mismatch repair protein MutS (889 aa).

Gly-641–Ser-648 provides a ligand contact to ATP.

This sequence belongs to the DNA mismatch repair MutS family.

In terms of biological role, this protein is involved in the repair of mismatches in DNA. It is possible that it carries out the mismatch recognition step. This protein has a weak ATPase activity. The sequence is that of DNA mismatch repair protein MutS from Orientia tsutsugamushi (strain Boryong) (Rickettsia tsutsugamushi).